Consider the following 80-residue polypeptide: MPAIEVGRVCIKTAGREAGKVCVIVDILDKNFVIVDGLVKRRRCNIKHLEPTEKKVDIPKGASTEEVKLALDAAGLLKEE.

Belongs to the eukaryotic ribosomal protein eL14 family.

This is Large ribosomal subunit protein eL14 from Methanocaldococcus jannaschii (strain ATCC 43067 / DSM 2661 / JAL-1 / JCM 10045 / NBRC 100440) (Methanococcus jannaschii).